Consider the following 347-residue polypeptide: Oxygen sensor histidine kinase NreB (347 aa).

Positions 59, 62, 74, and 77 each coordinate [4Fe-4S] cluster. Residues 153–347 (RISRELHDGI…IVTLEVPITD (195 aa)) enclose the Histidine kinase domain. The residue at position 159 (His159) is a Phosphohistidine; by autocatalysis.

[4Fe-4S] cluster serves as cofactor. Post-translationally, autophosphorylated.

The protein localises to the cytoplasm. It catalyses the reaction ATP + protein L-histidine = ADP + protein N-phospho-L-histidine.. Its activity is regulated as follows. Activated by cysteine desulfurase, Fe(2+) ions and cysteine and inhibited by oxygen and ADP. Its function is as follows. Member of the two-component regulatory system NreB/NreC involved in the control of dissimilatory nitrate/nitrite reduction in response to oxygen. NreB functions as a direct oxygen sensor histidine kinase which is autophosphorylated, in the absence of oxygen, probably at the conserved histidine residue, and transfers its phosphate group probably to a conserved aspartate residue of NreC. NreB/NreC activates the expression of the nitrate (narGHJI) and nitrite (nir) reductase operons, as well as the putative nitrate transporter gene narT. The polypeptide is Oxygen sensor histidine kinase NreB (nreB) (Staphylococcus carnosus (strain TM300)).